A 148-amino-acid chain; its full sequence is FAD synthase (148 aa).

ATP-binding positions include 5 to 6 (TF), 10 to 13 (HPGH), Asp92, and Tyr119.

The protein belongs to the archaeal FAD synthase family. As to quaternary structure, homodimer. The cofactor is a divalent metal cation.

It carries out the reaction FMN + ATP + H(+) = FAD + diphosphate. It participates in cofactor biosynthesis; FAD biosynthesis; FAD from FMN: step 1/1. Catalyzes the transfer of the AMP portion of ATP to flavin mononucleotide (FMN) to produce flavin adenine dinucleotide (FAD) coenzyme. This chain is FAD synthase, found in Methanosphaera stadtmanae (strain ATCC 43021 / DSM 3091 / JCM 11832 / MCB-3).